A 103-amino-acid polypeptide reads, in one-letter code: Methane monooxygenase component D (103 aa).

As to quaternary structure, the soluble methane monooxygenase (sMMO) consists of four components A/MMOH (composed of alpha/MmoX, beta/MmoY and gamma/MmoZ), B/MMOB (MmoB), C/MMOR (MmoC) and D/MMOD (MmoD).

This Methylococcus capsulatus (strain ATCC 33009 / NCIMB 11132 / Bath) protein is Methane monooxygenase component D (mmoD).